A 222-amino-acid polypeptide reads, in one-letter code: Flagellar L-ring protein (222 aa).

An N-terminal signal peptide occupies residues 1–21 (MQTFLYPRTWLILGLLLLGSG). Cys-22 carries the N-palmitoyl cysteine lipid modification. A lipid anchor (S-diacylglycerol cysteine) is attached at Cys-22.

This sequence belongs to the FlgH family. As to quaternary structure, the basal body constitutes a major portion of the flagellar organelle and consists of four rings (L,P,S, and M) mounted on a central rod.

It is found in the cell outer membrane. It localises to the bacterial flagellum basal body. In terms of biological role, assembles around the rod to form the L-ring and probably protects the motor/basal body from shearing forces during rotation. This is Flagellar L-ring protein from Methylobacillus flagellatus (strain ATCC 51484 / DSM 6875 / VKM B-1610 / KT).